Here is an 85-residue protein sequence, read N- to C-terminus: Neurotoxin beta-KTx 14.3 (85 aa).

The signal sequence occupies residues 1 to 20; the sequence is MKQYIFFLALIVLTATFAEA. Positions 21–37 are excised as a propeptide; sequence GKKTEILDKVKKVFSKG. The BetaSPN-type CS-alpha/beta domain maps to 49–85; sequence ELGCPFIEKWCEDHCESKKQVGKCENFDCSCVKLGGK. Cystine bridges form between cysteine 52-cysteine 72, cysteine 59-cysteine 77, and cysteine 63-cysteine 79.

This sequence belongs to the long chain scorpion toxin family. Class 2 subfamily. Expressed by the venom gland.

It is found in the secreted. Its function is as follows. Toxin with activity on voltage-gated potassium channels. Moderately and reversibly blocks up to 50% of the activity of Kv7.1/KCNQ1 (tested at 22 uM). 3D-structure modeling of the KCNQ1-toxin complex shows that the toxin interacts with the channel pore domain. Additionally, shows a very weak effect to block voltage-gated potassium channel Kv1.1/KCNA1. In terms of biological role, has a very weak effect to block voltage-gated potassium channel Kv1.1/KCNA1. The protein is Neurotoxin beta-KTx 14.3 of Lychas mucronatus (Chinese swimming scorpion).